Here is a 361-residue protein sequence, read N- to C-terminus: Cilia- and flagella-associated protein 263 (361 aa).

The protein belongs to the CFAP263 family. As to quaternary structure, forms a complex with CFAP184; the interaction is required for functional activity in cilia.

The protein localises to the cell projection. It localises to the cilium. In complex with CFAP263, acts as a regulator of ciliary beating that connects radial spoke 3 (RS3) to the inner dynein arm (IDA) and the nexin-dynein regulatory complex (N-DRC). The complex is positioned parallel to N-DRC and forms a connection between the arch at the base of RS3, the IDA tail and N-DRC. The protein is Cilia- and flagella-associated protein 263 (CFAP263) of Tetrahymena thermophila (strain SB210).